The chain runs to 302 residues: MKVGIIMGGISSEREVSLASGESIFNHIDKEKYEVSKIIINNKIDILEKVKGLDFALLALHGKFGEDGTVQAFLDIMDIPYSGCGALSSSLCMDKNLSKKVLKAENIRTAKWITVKSIEEIDYEKIEEIGYPVFVKPNNGGSSVATFKVYKKEDIKNSVMEGLKYDEEVIIESFIKGREITCPIFNGELFPILEIKSKADFYDYKQKYAANGAEHLPVQLEKSLYDEVKEMALKTFEVLKCEVYARVDMIISEEGVPYILEVNTLPGMTATSLFPQSAESRGISYSKFIDLIIETSLNKKIK.

One can recognise an ATP-grasp domain in the interval 99-294 (KKVLKAENIR…YSKFIDLIIE (196 aa)). 126–181 (IEEIGYPVFVKPNNGGSSVATFKVYKKEDIKNSVMEGLKYDEEVIIESFIKGREIT) is an ATP binding site. Residues D248, E261, and N263 each contribute to the Mg(2+) site.

It belongs to the D-alanine--D-alanine ligase family. Mg(2+) is required as a cofactor. It depends on Mn(2+) as a cofactor.

It is found in the cytoplasm. It carries out the reaction 2 D-alanine + ATP = D-alanyl-D-alanine + ADP + phosphate + H(+). It functions in the pathway cell wall biogenesis; peptidoglycan biosynthesis. Its function is as follows. Cell wall formation. The protein is D-alanine--D-alanine ligase B of Clostridium perfringens (strain 13 / Type A).